A 103-amino-acid polypeptide reads, in one-letter code: uncharacterized protein (103 aa).

This is an uncharacterized protein from Dictyostelium discoideum (Social amoeba).